The sequence spans 400 residues: uncharacterized protein (400 aa).

Basic and acidic residues predominate over residues 112–126 (SESTAQIEKKPRKPL). The interval 112–151 (SESTAQIEKKPRKPLDSVGLLEGDRNKRKKSPQMNDFNIK) is disordered.

This is an uncharacterized protein from Homo sapiens (Human).